The sequence spans 429 residues: Glutamate-1-semialdehyde 2,1-aminomutase (429 aa).

Residue K270 is modified to N6-(pyridoxal phosphate)lysine.

It belongs to the class-III pyridoxal-phosphate-dependent aminotransferase family. HemL subfamily. Homodimer. Pyridoxal 5'-phosphate is required as a cofactor.

It localises to the cytoplasm. The catalysed reaction is (S)-4-amino-5-oxopentanoate = 5-aminolevulinate. The protein operates within porphyrin-containing compound metabolism; protoporphyrin-IX biosynthesis; 5-aminolevulinate from L-glutamyl-tRNA(Glu): step 2/2. In Cupriavidus pinatubonensis (strain JMP 134 / LMG 1197) (Cupriavidus necator (strain JMP 134)), this protein is Glutamate-1-semialdehyde 2,1-aminomutase.